We begin with the raw amino-acid sequence, 277 residues long: Large ribosomal subunit protein uL2 (277 aa).

Disordered regions lie at residues 37-58 (LHSKGGRNVHGRITTRHQGGGH) and 222-277 (GVAM…NRRR). Positions 268–277 (VRRRKQNRRR) are enriched in basic residues.

Belongs to the universal ribosomal protein uL2 family. As to quaternary structure, part of the 50S ribosomal subunit. Forms a bridge to the 30S subunit in the 70S ribosome.

One of the primary rRNA binding proteins. Required for association of the 30S and 50S subunits to form the 70S ribosome, for tRNA binding and peptide bond formation. It has been suggested to have peptidyltransferase activity; this is somewhat controversial. Makes several contacts with the 16S rRNA in the 70S ribosome. The sequence is that of Large ribosomal subunit protein uL2 from Parafrankia sp. (strain EAN1pec).